The chain runs to 104 residues: UPF0213 protein plu4503 (104 aa).

Positions 4-79 (NQWVLYLLKT…KQLSKQQKER (76 aa)) constitute a GIY-YIG domain.

Belongs to the UPF0213 family.

The chain is UPF0213 protein plu4503 from Photorhabdus laumondii subsp. laumondii (strain DSM 15139 / CIP 105565 / TT01) (Photorhabdus luminescens subsp. laumondii).